The chain runs to 507 residues: Archaeal-type glutamate synthase [NADPH] (507 aa).

2 consecutive 4Fe-4S ferredoxin-type domains span residues 10–39 and 41–70; these read FVVE…YDEN and NRVY…VRRN. Positions 19, 22, 25, 29, 50, 53, 56, and 60 each coordinate [4Fe-4S] cluster.

This sequence belongs to the glutamate synthase family. FMN serves as cofactor.

It carries out the reaction 2 L-glutamate + NADP(+) = L-glutamine + 2-oxoglutarate + NADPH + H(+). In Thermotoga neapolitana (strain ATCC 49049 / DSM 4359 / NBRC 107923 / NS-E), this protein is Archaeal-type glutamate synthase [NADPH].